The chain runs to 924 residues: Mediator of RNA polymerase II transcription subunit 16 (924 aa).

The protein belongs to the Mediator complex subunit 16 family. Component of the Mediator complex.

It is found in the nucleus. Component of the Mediator complex, a coactivator involved in the regulated transcription of nearly all RNA polymerase II-dependent genes. Mediator functions as a bridge to convey information from gene-specific regulatory proteins to the basal RNA polymerase II transcription machinery. Mediator is recruited to promoters by direct interactions with regulatory proteins and serves as a scaffold for the assembly of a functional preinitiation complex with RNA polymerase II and the general transcription factors. This is Mediator of RNA polymerase II transcription subunit 16 (SIN4) from Yarrowia lipolytica (strain CLIB 122 / E 150) (Yeast).